A 378-amino-acid chain; its full sequence is B3 domain-containing protein Os03g0622200 (378 aa).

Residues 29-124 constitute a DNA-binding region (TF-B3 1); that stretch reads SKHFLKHMVG…SFDVLIFDPS (96 aa). Residues 140-159 form a disordered region; it reads GRAENSAGAEQGGRNGRRTP. A DNA-binding region (TF-B3 2) is located at residues 256-370; it reads FVQVIHSSHV…TMTVHVLRRV (115 aa).

Its subcellular location is the nucleus. The polypeptide is B3 domain-containing protein Os03g0622200 (Oryza sativa subsp. japonica (Rice)).